Reading from the N-terminus, the 342-residue chain is L-threonine 3-dehydrogenase (342 aa).

C38 provides a ligand contact to Zn(2+). Active-site charge relay system residues include T40 and H43. Zn(2+) contacts are provided by H63, E64, C93, C96, C99, and C107. Residues I175, D195, R200, 262-264 (LGL), and 286-287 (IY) each bind NAD(+).

The protein belongs to the zinc-containing alcohol dehydrogenase family. In terms of assembly, homotetramer. The cofactor is Zn(2+).

It localises to the cytoplasm. It carries out the reaction L-threonine + NAD(+) = (2S)-2-amino-3-oxobutanoate + NADH + H(+). The protein operates within amino-acid degradation; L-threonine degradation via oxydo-reductase pathway; glycine from L-threonine: step 1/2. In terms of biological role, catalyzes the NAD(+)-dependent oxidation of L-threonine to 2-amino-3-ketobutyrate. In Streptomyces avermitilis (strain ATCC 31267 / DSM 46492 / JCM 5070 / NBRC 14893 / NCIMB 12804 / NRRL 8165 / MA-4680), this protein is L-threonine 3-dehydrogenase.